A 91-amino-acid polypeptide reads, in one-letter code: MARVTVQDAVEKIGNRFDLVLVAARRARQLQVGAKDPLVPEENDKMTVIALREIEEGLINGKILDARERQEQQEQEAAELQAVSAIAEGRR.

Belongs to the RNA polymerase subunit omega family. In terms of assembly, the RNAP catalytic core consists of 2 alpha, 1 beta, 1 beta' and 1 omega subunit. When a sigma factor is associated with the core the holoenzyme is formed, which can initiate transcription.

It carries out the reaction RNA(n) + a ribonucleoside 5'-triphosphate = RNA(n+1) + diphosphate. In terms of biological role, promotes RNA polymerase assembly. Latches the N- and C-terminal regions of the beta' subunit thereby facilitating its interaction with the beta and alpha subunits. This chain is DNA-directed RNA polymerase subunit omega, found in Proteus mirabilis (strain HI4320).